A 210-amino-acid polypeptide reads, in one-letter code: Large ribosomal subunit protein uL3 (210 aa).

The tract at residues 133–156 is disordered; it reads ASHGNSLSHRVPGSIGQNQTPGKV. Gln-151 carries the N5-methylglutamine modification.

The protein belongs to the universal ribosomal protein uL3 family. As to quaternary structure, part of the 50S ribosomal subunit. Forms a cluster with proteins L14 and L19. Post-translationally, methylated by PrmB.

One of the primary rRNA binding proteins, it binds directly near the 3'-end of the 23S rRNA, where it nucleates assembly of the 50S subunit. The protein is Large ribosomal subunit protein uL3 of Hamiltonella defensa subsp. Acyrthosiphon pisum (strain 5AT).